Reading from the N-terminus, the 423-residue chain is Gamma-glutamyl phosphate reductase (423 aa).

This sequence belongs to the gamma-glutamyl phosphate reductase family.

Its subcellular location is the cytoplasm. It catalyses the reaction L-glutamate 5-semialdehyde + phosphate + NADP(+) = L-glutamyl 5-phosphate + NADPH + H(+). Its pathway is amino-acid biosynthesis; L-proline biosynthesis; L-glutamate 5-semialdehyde from L-glutamate: step 2/2. Catalyzes the NADPH-dependent reduction of L-glutamate 5-phosphate into L-glutamate 5-semialdehyde and phosphate. The product spontaneously undergoes cyclization to form 1-pyrroline-5-carboxylate. In Pseudomonas putida (strain W619), this protein is Gamma-glutamyl phosphate reductase.